We begin with the raw amino-acid sequence, 208 residues long: Transmembrane protein 222 (208 aa).

The tract at residues 1 to 26 is disordered; the sequence is MAEAEGSSLLLLPPPPPPPRMAEVEA. The Extracellular portion of the chain corresponds to 1-55; it reads MAEAEGSSLLLLPPPPPPPRMAEVEAPTAAETDMKQYQGSGGVAMDVERSRFPYC. A helical transmembrane segment spans residues 56–76; sequence VVWTPIPVLTWFFPIIGHMGI. Over 77 to 164 the chain is Cytoplasmic; sequence CTSTGVIRDF…MRYNNSTNWN (88 aa). A helical membrane pass occupies residues 165 to 185; that stretch reads MVTLCFFCLLYGKYVSVGAFV. Position 186 (Lys-186) is a topological domain, extracellular. Residues 187–207 traverse the membrane as a helical segment; that stretch reads TWLPFILLLGIILTVSLVFNL. Position 208 (Arg-208) is a topological domain, cytoplasmic.

As to expression, widely expressed. The highest expression is observed in the brain.

The protein resides in the membrane. It is found in the cell projection. It localises to the dendrite. The sequence is that of Transmembrane protein 222 (TMEM222) from Homo sapiens (Human).